Here is a 453-residue protein sequence, read N- to C-terminus: Kynureninase (453 aa).

Pyridoxal 5'-phosphate-binding positions include leucine 114, threonine 115, 142 to 145 (FPSD), aspartate 232, histidine 235, and tyrosine 257. Residue lysine 258 is modified to N6-(pyridoxal phosphate)lysine. Tryptophan 286 contributes to the pyridoxal 5'-phosphate binding site.

The protein belongs to the kynureninase family. In terms of assembly, homodimer. Pyridoxal 5'-phosphate serves as cofactor.

It is found in the cytoplasm. It carries out the reaction L-kynurenine + H2O = anthranilate + L-alanine + H(+). It catalyses the reaction 3-hydroxy-L-kynurenine + H2O = 3-hydroxyanthranilate + L-alanine + H(+). The protein operates within amino-acid degradation; L-kynurenine degradation; L-alanine and anthranilate from L-kynurenine: step 1/1. It functions in the pathway cofactor biosynthesis; NAD(+) biosynthesis; quinolinate from L-kynurenine: step 2/3. In terms of biological role, catalyzes the cleavage of L-kynurenine (L-Kyn) and L-3-hydroxykynurenine (L-3OHKyn) into anthranilic acid (AA) and 3-hydroxyanthranilic acid (3-OHAA), respectively. This is Kynureninase from Cryptococcus neoformans var. neoformans serotype D (strain JEC21 / ATCC MYA-565) (Filobasidiella neoformans).